The primary structure comprises 132 residues: Small ribosomal subunit protein uS8 (132 aa).

The protein belongs to the universal ribosomal protein uS8 family. As to quaternary structure, part of the 30S ribosomal subunit. Contacts proteins S5 and S12.

Functionally, one of the primary rRNA binding proteins, it binds directly to 16S rRNA central domain where it helps coordinate assembly of the platform of the 30S subunit. The protein is Small ribosomal subunit protein uS8 of Lactococcus lactis subsp. cremoris (strain MG1363).